The sequence spans 168 residues: uncharacterized protein (168 aa).

An N-terminal signal peptide occupies residues 1–21 (MVYEVLAVVSGGLLGFGVTWA).

This is an uncharacterized protein from Archaeoglobus fulgidus (strain ATCC 49558 / DSM 4304 / JCM 9628 / NBRC 100126 / VC-16).